Here is a 489-residue protein sequence, read N- to C-terminus: Dihydropyrimidinase 1 (489 aa).

His-61, His-63, and Lys-156 together coordinate Zn(2+). N6-carboxylysine is present on Lys-156. Tyr-161 serves as a coordination point for substrate. Residues His-189 and His-245 each coordinate Zn(2+). Ser-295 lines the substrate pocket. Residue Asp-323 participates in Zn(2+) binding. Asn-344 provides a ligand contact to substrate.

Belongs to the metallo-dependent hydrolases superfamily. Hydantoinase/dihydropyrimidinase family. As to quaternary structure, homotetramer. The cofactor is Zn(2+). Post-translationally, carboxylation allows a single lysine to coordinate two zinc ions. In L1-L2 larvae, expressed in body hypodermal cells, hemidesmosomes and in a neuronal cell between the pharynx and ring neuropil. In adults, expression is seen in body hypodermal cells and pharynx.

The protein localises to the nucleus. It carries out the reaction 5,6-dihydrouracil + H2O = 3-(carbamoylamino)propanoate + H(+). In Caenorhabditis elegans, this protein is Dihydropyrimidinase 1 (dhp-1).